The chain runs to 136 residues: Blasticidin-S acetyltransferase (136 aa).

Residues 1–136 enclose the N-acetyltransferase domain; sequence MLSLPRLQTV…ITSHLLVKEL (136 aa).

Functionally, confers resistance to blasticidin S antibiotic. The chain is Blasticidin-S acetyltransferase (bls) from Streptomyces morookaense (Streptoverticillium morookaense).